A 475-amino-acid polypeptide reads, in one-letter code: Glycogen synthase (475 aa).

Lysine 15 serves as a coordination point for ADP-alpha-D-glucose.

This sequence belongs to the glycosyltransferase 1 family. Bacterial/plant glycogen synthase subfamily.

The catalysed reaction is [(1-&gt;4)-alpha-D-glucosyl](n) + ADP-alpha-D-glucose = [(1-&gt;4)-alpha-D-glucosyl](n+1) + ADP + H(+). It participates in glycan biosynthesis; glycogen biosynthesis. In terms of biological role, synthesizes alpha-1,4-glucan chains using ADP-glucose. The sequence is that of Glycogen synthase from Anaeromyxobacter sp. (strain Fw109-5).